The following is a 303-amino-acid chain: tRNA dimethylallyltransferase (303 aa).

Residue 10 to 17 (GPTASGKS) participates in ATP binding. 12 to 17 (TASGKS) contributes to the substrate binding site. An interaction with substrate tRNA region spans residues 35–38 (DSMQ).

Belongs to the IPP transferase family. As to quaternary structure, monomer. Mg(2+) is required as a cofactor.

The enzyme catalyses adenosine(37) in tRNA + dimethylallyl diphosphate = N(6)-dimethylallyladenosine(37) in tRNA + diphosphate. Its function is as follows. Catalyzes the transfer of a dimethylallyl group onto the adenine at position 37 in tRNAs that read codons beginning with uridine, leading to the formation of N6-(dimethylallyl)adenosine (i(6)A). The polypeptide is tRNA dimethylallyltransferase (Methylobacterium nodulans (strain LMG 21967 / CNCM I-2342 / ORS 2060)).